The chain runs to 523 residues: L-tyrosine:2-oxoglutarate aminotransferase ucdG (523 aa).

The protein belongs to the class-I pyridoxal-phosphate-dependent aminotransferase family. Homodimer. Requires pyridoxal 5'-phosphate as cofactor.

Its subcellular location is the cytoplasm. The catalysed reaction is L-tyrosine + 2-oxoglutarate = 3-(4-hydroxyphenyl)pyruvate + L-glutamate. It participates in secondary metabolite biosynthesis. Its function is as follows. Nonribosomal peptide synthetase that mediates the biosynthesis of usterphenyllins and uscandidusins, p-terphenyl derivatives. Within the pathway, ucdG is probably involved in the conversion of L-tyrosine into 4-hydroxyphenylpyruvate (HPPA) as a precursor for the usterphenyllin and uscandidusin biosynthesis. UcdE further prenylates position C-14 of ring C of usterphenyllin B to form usterphenyllin A. The pathway begin with the biosynthesis of 4-hydroxyphenylpyruvate (HPPA) from L-tyrosine, possibly by the aminotransferase ucdG. The nonribosomal peptide synthetase ucdA then condenses two HPPA units to produce atromentin. The key step in this pathway is the reduction and dehydration of atromentin to form a terphenyl triol intermediate, performed by the NAD-dependent dehydrogenase ucdB. Further O-methylation by the methyltransferase ucdC forms terphenyllin carrying two methoxy moieties at C-9 and C-12, and subsequent dihydroxylation at C-3 of ring A and C-15 of ring C by the flavin-dependent oxygenase ucdD leads to 3,15-dihydroxyterphenyllin. Prenylation by ucdE at position C-5 of ring A forms usterphenyllin B, and is followed by a second prenylation at position C-14 of ring C to form usterphenyllin A. The following furan ring formation that leads to uscandidusins A and B was proven to be an unexpected spontaneous non-enzymatic reaction. The polypeptide is L-tyrosine:2-oxoglutarate aminotransferase ucdG (Aspergillus ustus).